Reading from the N-terminus, the 248-residue chain is Proteasome subunit alpha type-7 (248 aa).

A glycan (O-linked (GlcNAc) serine) is linked at S130. The residue at position 153 (Y153) is a Phosphotyrosine.

The protein belongs to the peptidase T1A family. The 26S proteasome consists of a 20S proteasome core and two 19S regulatory subunits. The 20S proteasome core is a barrel-shaped complex made of 28 subunits that are arranged in four stacked rings. The two outer rings are each formed by seven alpha subunits, and the two inner rings are formed by seven beta subunits. The proteolytic activity is exerted by three beta-subunits PSMB5, PSMB6 and PSMB7. PSMA7 interacts directly with the PSMG1-PSMG2 heterodimer which promotes 20S proteasome assembly. Interacts with HIF1A. Interacts with RAB7A. Interacts with PRKN. Interacts with ABL1 and ABL2. Interacts with EMAP2. Interacts with MAVS.

The protein resides in the cytoplasm. The protein localises to the nucleus. Its function is as follows. Component of the 20S core proteasome complex involved in the proteolytic degradation of most intracellular proteins. This complex plays numerous essential roles within the cell by associating with different regulatory particles. Associated with two 19S regulatory particles, forms the 26S proteasome and thus participates in the ATP-dependent degradation of ubiquitinated proteins. The 26S proteasome plays a key role in the maintenance of protein homeostasis by removing misfolded or damaged proteins that could impair cellular functions, and by removing proteins whose functions are no longer required. Associated with the PA200 or PA28, the 20S proteasome mediates ubiquitin-independent protein degradation. This type of proteolysis is required in several pathways including spermatogenesis (20S-PA200 complex) or generation of a subset of MHC class I-presented antigenic peptides (20S-PA28 complex). Inhibits the transactivation function of HIF-1A under both normoxic and hypoxia-mimicking conditions. The interaction with EMAP2 increases the proteasome-mediated HIF-1A degradation under the hypoxic conditions. Plays a role in hepatitis C virus internal ribosome entry site-mediated translation. Mediates nuclear translocation of the androgen receptor (AR) and thereby enhances androgen-mediated transactivation. Promotes MAVS degradation and thereby negatively regulates MAVS-mediated innate immune response. The protein is Proteasome subunit alpha type-7 (PSMA7) of Pongo abelii (Sumatran orangutan).